The following is a 411-amino-acid chain: Squalene synthase (411 aa).

The next 2 helical transmembrane spans lie at 281–301 (SIFRFCAIPQVMAIGTLAMCY) and 388–408 (SPVLIVVIFIILAIILAQLSG).

The protein belongs to the phytoene/squalene synthase family. Mg(2+) serves as cofactor.

It localises to the endoplasmic reticulum membrane. The enzyme catalyses 2 (2E,6E)-farnesyl diphosphate + NADPH + H(+) = squalene + 2 diphosphate + NADP(+). It carries out the reaction 2 (2E,6E)-farnesyl diphosphate + NADH + H(+) = squalene + 2 diphosphate + NAD(+). The protein operates within terpene metabolism; lanosterol biosynthesis; lanosterol from farnesyl diphosphate: step 1/3. The sequence is that of Squalene synthase from Nicotiana benthamiana.